Reading from the N-terminus, the 378-residue chain is Chloroplast stem-loop binding protein of 41 kDa b, chloroplastic (378 aa).

A chloroplast-targeting transit peptide spans 1–50 (MAKMMMLQQHQPSFSLLTSSLSDFNGAKLHLQVQYKRKVHQPKGALYVSA). Position 240 is a phosphoserine (S240).

Belongs to the NAD(P)-dependent epimerase/dehydratase family. As to quaternary structure, component of a complex made of CSP41A, CSP41B, ribosomes, and the plastid-encoded RNA polymerase. Interacts with CSP41A. Binds DNA when in complex with PRIN2. As to expression, highly expressed in seedlings, particularly in photosynthetically active organs. Mostly expressed in young and mature leaves, and, to a lower extent, in flowers. Low expression in etiolated seedlings compared to green seedlings.

It is found in the plastid. The protein resides in the chloroplast. It localises to the plastoglobule. Its subcellular location is the cytoplasm. Functionally, binds and cleaves RNA, particularly in stem-loops. Associates with pre-ribosomal particles in chloroplasts, and participates in chloroplast ribosomal RNA metabolism, probably during the final steps of 23S rRNA maturation. May enhance transcription by the plastid-encoded polymerase and translation in plastid via the stabilization of ribosome assembly intermediates. Required for chloroplast integrity. Involved in the regulation of the circadian system. Involved in the regulation of heteroglycans and monosaccharide mobilization. Required for full expression of genes transcribed by the plastid-encoded RNA polymerase (PEP). Essential for embryo development. This is Chloroplast stem-loop binding protein of 41 kDa b, chloroplastic (CSP41B) from Arabidopsis thaliana (Mouse-ear cress).